Reading from the N-terminus, the 59-residue chain is Large ribosomal subunit protein bL32 (59 aa).

Residues 1–16 (MAVPKRKTSPSKRGMR) show a composition bias toward basic residues. The disordered stretch occupies residues 1 to 59 (MAVPKRKTSPSKRGMRRSADALKAPTYIEDKNSGELRRPHHIDLKTGMYRGRSVLPPKD). Over residues 28 to 44 (IEDKNSGELRRPHHIDL) the composition is skewed to basic and acidic residues.

This sequence belongs to the bacterial ribosomal protein bL32 family.

This Bartonella quintana (strain Toulouse) (Rochalimaea quintana) protein is Large ribosomal subunit protein bL32.